We begin with the raw amino-acid sequence, 322 residues long: Transaldolase (322 aa).

Lys-136 acts as the Schiff-base intermediate with substrate in catalysis.

This sequence belongs to the transaldolase family. Type 1 subfamily. Homodimer.

Its subcellular location is the cytoplasm. It catalyses the reaction D-sedoheptulose 7-phosphate + D-glyceraldehyde 3-phosphate = D-erythrose 4-phosphate + beta-D-fructose 6-phosphate. It functions in the pathway carbohydrate degradation; pentose phosphate pathway; D-glyceraldehyde 3-phosphate and beta-D-fructose 6-phosphate from D-ribose 5-phosphate and D-xylulose 5-phosphate (non-oxidative stage): step 2/3. Transaldolase is important for the balance of metabolites in the pentose-phosphate pathway. The chain is Transaldolase from Xanthomonas oryzae pv. oryzae (strain PXO99A).